The chain runs to 472 residues: Riboflavin transporter RibJ (472 aa).

The Cytoplasmic segment spans residues 1-11 (MLPCFTRKPVD). A helical membrane pass occupies residues 12–32 (HPLGFLVALSGLLMQLMSYGI). Topologically, residues 33–58 (DNSYSIFSDDMHKDPSLGYPSVTTIS) are extracellular. Residues 59–79 (LGNSVSLGLSPAFGVLCGFLV) form a helical membrane-spanning segment. Residues 80-85 (DRVPPR) lie on the Cytoplasmic side of the membrane. The chain crosses the membrane as a helical span at residues 86 to 106 (LMMAVSTLMLFAGLWLSSTFA). Residues 107 to 108 (HN) lie on the Extracellular side of the membrane. N-linked (GlcNAc...) asparagine glycosylation occurs at Asn108. Residues 109–129 (VTAVTFSYCLLASISSACMLS) traverse the membrane as a helical segment. Residues 130 to 144 (PGAAATSSWFNRYQG) lie on the Cytoplasmic side of the membrane. A helical membrane pass occupies residues 145–165 (LAMGINFSGGGVGSAIIPSLA). The Extracellular portion of the chain corresponds to 166 to 179 (GKWVVAYGWRKTFR). Residues 180–196 (LMSAFCAIGVVATLLSA) traverse the membrane as a helical segment. Residues 197 to 271 (RRAPPKKEEA…TMFSRAFLGN (75 aa)) lie on the Cytoplasmic side of the membrane. A disordered region spans residues 200-248 (PPKKEEAGPSEYDEGQERQEQGEEEQAHTDEENRNNNNSNGETTPARRG). Residues 214 to 233 (GQERQEQGEEEQAHTDEENR) are compositionally biased toward basic and acidic residues. Residues 272–292 (FFCWLIFSWAFYSLIYVAVPY) traverse the membrane as a helical segment. At 293 to 315 (VSSMGKAGTVYADISPIPTDIAS) the chain is on the extracellular side. The chain crosses the membrane as a helical span at residues 316–336 (TLFTFYGVFQIVGSILVGWLA). Residues 337–341 (TGTTN) are Cytoplasmic-facing. The helical transmembrane segment at 342–362 (EFAYVLCATIGGIFCAFLGFC) threads the bilayer. The Extracellular segment spans residues 363 to 365 (RSY). The chain crosses the membrane as a helical span at residues 366-386 (VAFALLLCVIGFCMAGMFAVM). The Cytoplasmic segment spans residues 387–399 (PALIAERLYGPNL). The helical transmembrane segment at 400-420 (GFYMGAVFLAGVVGGFSAPPI) threads the bilayer. The Extracellular portion of the chain corresponds to 421-434 (QAELQQRHYGNYTY). N-linked (GlcNAc...) asparagine glycosylation occurs at Asn431. The chain crosses the membrane as a helical span at residues 435–455 (VCVFMSACMTLAAAVCYITMW). Residues 456–472 (RDKRVRIVSAAAEAKLA) are Cytoplasmic-facing.

It belongs to the major facilitator superfamily. RibJ family.

Its subcellular location is the cell membrane. Transporter involved in riboflavin (vitamin B2) uptake. Also transports FMN and FAD. The chain is Riboflavin transporter RibJ from Trypanosoma cruzi (strain CL Brener).